Reading from the N-terminus, the 237-residue chain is MRGGAVTIHVKDRQIVAPGEFVGEQGRFRVEGQVFRVGRKYYSKVLGVVTVDEENRVVKVIPLKGKYFPVEGHIVVGKVVDIGFTSWEVDINSPYVAVLPVSEVTSRPVTISRNELSRILDVGDLILAKIVSFDLSKDPVLTIKESRLGKIPRGTLVEIPPQKVPRVIGRRGSMVSMIEDLLGVKLIVGQNGRIVVVGDDPQRVEIAVLAVRKIEAEAHTTGLTDRIKQFIEERLRS.

In terms of domain architecture, S1 motif spans 72–144; it reads GHIVVGKVVD…LSKDPVLTIK (73 aa). Residues 152–211 enclose the KH domain; that stretch reads PRGTLVEIPPQKVPRVIGRRGSMVSMIEDLLGVKLIVGQNGRIVVVGDDPQRVEIAVLAV.

This sequence belongs to the RRP4 family. In terms of assembly, component of the archaeal exosome complex. Forms a trimer of Rrp4 and/or Csl4 subunits. The trimer associates with a hexameric ring-like arrangement composed of 3 Rrp41-Rrp42 heterodimers.

It is found in the cytoplasm. In terms of biological role, non-catalytic component of the exosome, which is a complex involved in RNA degradation. Increases the RNA binding and the efficiency of RNA degradation. Confers strong poly(A) specificity to the exosome. The chain is Exosome complex component Rrp4 from Thermofilum pendens (strain DSM 2475 / Hrk 5).